Reading from the N-terminus, the 657-residue chain is Glycogen debranching enzyme (657 aa).

The Nucleophile role is filled by Asp336. Catalysis depends on Glu371, which acts as the Proton donor. Residues 458-467 show a composition bias toward basic and acidic residues; that stretch reads NEANGEENRD. The tract at residues 458 to 479 is disordered; sequence NEANGEENRDGTNNNYSNNHGK.

It belongs to the glycosyl hydrolase 13 family.

The catalysed reaction is Hydrolysis of (1-&gt;6)-alpha-D-glucosidic linkages to branches with degrees of polymerization of three or four glucose residues in limit dextrin.. Its pathway is glycan degradation; glycogen degradation. Functionally, removes maltotriose and maltotetraose chains that are attached by 1,6-alpha-linkage to the limit dextrin main chain, generating a debranched limit dextrin. The polypeptide is Glycogen debranching enzyme (Escherichia coli O8 (strain IAI1)).